A 409-amino-acid chain; its full sequence is uncharacterized protein (409 aa).

The EAL domain maps to 1–209 (MRVFVARQPI…GHDLSTHFYS (209 aa)). The region spanning 203 to 392 (LSTHFYSYYE…GNQLDKEEAY (190 aa)) is the HDOD domain.

This is an uncharacterized protein from Bacillus subtilis (strain 168).